The following is a 619-amino-acid chain: Eukaryotic translation initiation factor 3 subunit D (619 aa).

The interval 99 to 160 is disordered; that stretch reads QKQPHQRGRF…KWGARPPPKI (62 aa). The segment covering 100–121 has biased composition (basic residues); it reads KQPHQRGRFRGNLRNQRGRGRG. Positions 288–302 are RNA gate; it reads EFDLLTVNETAIEPP. The segment at 588–619 is disordered; the sequence is TPAATETVATATTEATTPTTATKTTAPAAAQK.

It belongs to the eIF-3 subunit D family. Component of the eukaryotic translation initiation factor 3 (eIF-3) complex.

It localises to the cytoplasm. MRNA cap-binding component of the eukaryotic translation initiation factor 3 (eIF-3) complex, which is involved in protein synthesis of a specialized repertoire of mRNAs and, together with other initiation factors, stimulates binding of mRNA and methionyl-tRNAi to the 40S ribosome. The eIF-3 complex specifically targets and initiates translation of a subset of mRNAs involved in cell proliferation. In the eIF-3 complex, eif3d specifically recognizes and binds the 7-methylguanosine cap of a subset of mRNAs. This Aedes aegypti (Yellowfever mosquito) protein is Eukaryotic translation initiation factor 3 subunit D.